A 348-amino-acid chain; its full sequence is Selenide, water dikinase (348 aa).

C17 is a catalytic residue. Residues K20 and 48-50 (TRD) each bind ATP. Mg(2+) is bound at residue D51. ATP is bound by residues D68, D91, and 139–141 (GHS). Residue D91 participates in Mg(2+) binding. D227 provides a ligand contact to Mg(2+).

Belongs to the selenophosphate synthase 1 family. Class I subfamily. As to quaternary structure, homodimer. Requires Mg(2+) as cofactor.

It carries out the reaction hydrogenselenide + ATP + H2O = selenophosphate + AMP + phosphate + 2 H(+). Functionally, synthesizes selenophosphate from selenide and ATP. This Yersinia pestis protein is Selenide, water dikinase.